The following is a 767-amino-acid chain: Protein hunchback (767 aa).

3 disordered regions span residues Glu-30–Ser-51, Gln-105–Gly-127, and Glu-174–Ser-212. The span at Ser-39 to Ser-51 shows a compositional bias: polar residues. Residues Gln-105–Gln-117 are compositionally biased toward low complexity. Positions Glu-200–Ser-212 are enriched in basic and acidic residues. 4 consecutive C2H2-type zinc fingers follow at residues Tyr-242–His-264, Leu-271–His-293, Phe-299–His-321, and Tyr-327–His-351. 3 disordered regions span residues Leu-357–Leu-424, Gln-518–Gln-570, and Gly-610–Ser-704. Gly residues predominate over residues Ile-386–Ser-397. The segment covering Gln-518–Ser-527 has biased composition (low complexity). The span at Asp-528–Glu-537 shows a compositional bias: acidic residues. Residues Ala-661–Ser-704 are compositionally biased toward low complexity. 2 consecutive C2H2-type zinc fingers follow at residues Tyr-714 to His-736 and Phe-742 to His-766.

Belongs to the hunchback C2H2-type zinc-finger protein family.

It localises to the nucleus. Gap class segmentation protein that controls development of head structures. The polypeptide is Protein hunchback (hb) (Drosophila orena (Fruit fly)).